The primary structure comprises 119 residues: Ribonuclease P protein component (119 aa).

The protein belongs to the RnpA family. As to quaternary structure, consists of a catalytic RNA component (M1 or rnpB) and a protein subunit.

It catalyses the reaction Endonucleolytic cleavage of RNA, removing 5'-extranucleotides from tRNA precursor.. RNaseP catalyzes the removal of the 5'-leader sequence from pre-tRNA to produce the mature 5'-terminus. It can also cleave other RNA substrates such as 4.5S RNA. The protein component plays an auxiliary but essential role in vivo by binding to the 5'-leader sequence and broadening the substrate specificity of the ribozyme. In Halalkalibacterium halodurans (strain ATCC BAA-125 / DSM 18197 / FERM 7344 / JCM 9153 / C-125) (Bacillus halodurans), this protein is Ribonuclease P protein component.